A 289-amino-acid polypeptide reads, in one-letter code: 4-hydroxy-tetrahydrodipicolinate synthase (289 aa).

A pyruvate-binding site is contributed by threonine 44. The active-site Proton donor/acceptor is the tyrosine 130. The Schiff-base intermediate with substrate role is filled by lysine 158. Isoleucine 200 contributes to the pyruvate binding site.

The protein belongs to the DapA family. In terms of assembly, homotetramer; dimer of dimers.

The protein resides in the cytoplasm. The catalysed reaction is L-aspartate 4-semialdehyde + pyruvate = (2S,4S)-4-hydroxy-2,3,4,5-tetrahydrodipicolinate + H2O + H(+). The protein operates within amino-acid biosynthesis; L-lysine biosynthesis via DAP pathway; (S)-tetrahydrodipicolinate from L-aspartate: step 3/4. In terms of biological role, catalyzes the condensation of (S)-aspartate-beta-semialdehyde [(S)-ASA] and pyruvate to 4-hydroxy-tetrahydrodipicolinate (HTPA). This is 4-hydroxy-tetrahydrodipicolinate synthase from Archaeoglobus fulgidus (strain ATCC 49558 / DSM 4304 / JCM 9628 / NBRC 100126 / VC-16).